We begin with the raw amino-acid sequence, 168 residues long: Cyclic pyranopterin monophosphate synthase (168 aa).

Substrate contacts are provided by residues 83–85 and 121–122; these read LCH and ME. Residue aspartate 136 is part of the active site.

It belongs to the MoaC family. Homohexamer; trimer of dimers.

It carries out the reaction (8S)-3',8-cyclo-7,8-dihydroguanosine 5'-triphosphate = cyclic pyranopterin phosphate + diphosphate. It functions in the pathway cofactor biosynthesis; molybdopterin biosynthesis. Its function is as follows. Catalyzes the conversion of (8S)-3',8-cyclo-7,8-dihydroguanosine 5'-triphosphate to cyclic pyranopterin monophosphate (cPMP). In Nostoc sp. (strain PCC 7120 / SAG 25.82 / UTEX 2576), this protein is Cyclic pyranopterin monophosphate synthase.